We begin with the raw amino-acid sequence, 362 residues long: Phosphoserine aminotransferase (362 aa).

Arginine 41 contributes to the L-glutamate binding site. Pyridoxal 5'-phosphate-binding positions include 75–76 (GS), phenylalanine 101, threonine 152, aspartate 173, and glutamine 196. Lysine 197 bears the N6-(pyridoxal phosphate)lysine mark. 239–240 (NT) contributes to the pyridoxal 5'-phosphate binding site.

This sequence belongs to the class-V pyridoxal-phosphate-dependent aminotransferase family. SerC subfamily. As to quaternary structure, homodimer. Requires pyridoxal 5'-phosphate as cofactor.

The protein localises to the cytoplasm. It catalyses the reaction O-phospho-L-serine + 2-oxoglutarate = 3-phosphooxypyruvate + L-glutamate. The enzyme catalyses 4-(phosphooxy)-L-threonine + 2-oxoglutarate = (R)-3-hydroxy-2-oxo-4-phosphooxybutanoate + L-glutamate. It participates in amino-acid biosynthesis; L-serine biosynthesis; L-serine from 3-phospho-D-glycerate: step 2/3. In terms of biological role, catalyzes the reversible conversion of 3-phosphohydroxypyruvate to phosphoserine and of 3-hydroxy-2-oxo-4-phosphonooxybutanoate to phosphohydroxythreonine. The protein is Phosphoserine aminotransferase of Leuconostoc mesenteroides subsp. mesenteroides (strain ATCC 8293 / DSM 20343 / BCRC 11652 / CCM 1803 / JCM 6124 / NCDO 523 / NBRC 100496 / NCIMB 8023 / NCTC 12954 / NRRL B-1118 / 37Y).